The following is an 805-amino-acid chain: Probable exo-1,4-beta-xylosidase xlnD (805 aa).

The first 17 residues, 1–17, serve as a signal peptide directing secretion; the sequence is MAVAALALLALLPQALG. Asn-20, Asn-115, Asn-140, Asn-235, and Asn-244 each carry an N-linked (GlcNAc...) asparagine glycan. Asp-308 is an active-site residue. N-linked (GlcNAc...) asparagine glycans are attached at residues Asn-350, Asn-383, Asn-405, Asn-434, Asn-445, Asn-486, Asn-490, Asn-622, Asn-653, Asn-667, Asn-689, and Asn-711.

This sequence belongs to the glycosyl hydrolase 3 family.

It is found in the secreted. It carries out the reaction Hydrolysis of (1-&gt;4)-beta-D-xylans, to remove successive D-xylose residues from the non-reducing termini.. Its pathway is glycan degradation; xylan degradation. Its function is as follows. Xylan 1,4-beta-xylosidase involved in the hydrolysis of xylan, a major structural heterogeneous polysaccharide found in plant biomass representing the second most abundant polysaccharide in the biosphere, after cellulose. This chain is Probable exo-1,4-beta-xylosidase xlnD (xlnD), found in Aspergillus aculeatus.